Reading from the N-terminus, the 383-residue chain is Putative F-box/kelch-repeat protein At1g62270 (383 aa).

The F-box domain maps to 6-51; sequence TSSFSSLPWDLVEDILARVPATSLKRLRSTCKQWNFLFNDQIFTKM. 3 Kelch repeats span residues 110–158, 160–211, and 349–383; these read KVFH…YGNY, SCYN…LRGN, and TVYI…LVQI.

The polypeptide is Putative F-box/kelch-repeat protein At1g62270 (Arabidopsis thaliana (Mouse-ear cress)).